The chain runs to 447 residues: Signal recognition particle 54 kDa protein (447 aa).

GTP contacts are provided by residues 103-110 (GVQGSGKT), 185-189 (DTAGR), and 245-248 (TKMD).

This sequence belongs to the GTP-binding SRP family. SRP54 subfamily. Part of the signal recognition particle protein translocation system, which is composed of SRP and FtsY. Archaeal SRP consists of a 7S RNA molecule of 300 nucleotides and two protein subunits: SRP54 and SRP19.

Its subcellular location is the cytoplasm. It catalyses the reaction GTP + H2O = GDP + phosphate + H(+). Involved in targeting and insertion of nascent membrane proteins into the cytoplasmic membrane. Binds to the hydrophobic signal sequence of the ribosome-nascent chain (RNC) as it emerges from the ribosomes. The SRP-RNC complex is then targeted to the cytoplasmic membrane where it interacts with the SRP receptor FtsY. The polypeptide is Signal recognition particle 54 kDa protein (Saccharolobus islandicus (strain M.16.27) (Sulfolobus islandicus)).